The following is a 368-amino-acid chain: tRNA/tmRNA (uracil-C(5))-methyltransferase (368 aa).

Residues Gln-192, Tyr-220, Asn-225, Glu-241, and Asp-301 each contribute to the S-adenosyl-L-methionine site. The active-site Nucleophile is Cys-326. Glu-360 serves as the catalytic Proton acceptor.

The protein belongs to the class I-like SAM-binding methyltransferase superfamily. RNA M5U methyltransferase family. TrmA subfamily.

The enzyme catalyses uridine(54) in tRNA + S-adenosyl-L-methionine = 5-methyluridine(54) in tRNA + S-adenosyl-L-homocysteine + H(+). It carries out the reaction uridine(341) in tmRNA + S-adenosyl-L-methionine = 5-methyluridine(341) in tmRNA + S-adenosyl-L-homocysteine + H(+). Dual-specificity methyltransferase that catalyzes the formation of 5-methyluridine at position 54 (m5U54) in all tRNAs, and that of position 341 (m5U341) in tmRNA (transfer-mRNA). In Actinobacillus pleuropneumoniae serotype 5b (strain L20), this protein is tRNA/tmRNA (uracil-C(5))-methyltransferase.